The chain runs to 418 residues: NADH-quinone oxidoreductase subunit D (418 aa).

Belongs to the complex I 49 kDa subunit family. As to quaternary structure, NDH-1 is composed of 14 different subunits. Subunits NuoB, C, D, E, F, and G constitute the peripheral sector of the complex.

It localises to the cell inner membrane. The enzyme catalyses a quinone + NADH + 5 H(+)(in) = a quinol + NAD(+) + 4 H(+)(out). NDH-1 shuttles electrons from NADH, via FMN and iron-sulfur (Fe-S) centers, to quinones in the respiratory chain. The immediate electron acceptor for the enzyme in this species is believed to be ubiquinone. Couples the redox reaction to proton translocation (for every two electrons transferred, four hydrogen ions are translocated across the cytoplasmic membrane), and thus conserves the redox energy in a proton gradient. The chain is NADH-quinone oxidoreductase subunit D from Bordetella avium (strain 197N).